A 183-amino-acid chain; its full sequence is Dual-action ribosomal maturation protein DarP (183 aa).

It belongs to the DarP family.

The protein localises to the cytoplasm. Functionally, member of a network of 50S ribosomal subunit biogenesis factors which assembles along the 30S-50S interface, preventing incorrect 23S rRNA structures from forming. Promotes peptidyl transferase center (PTC) maturation. The protein is Dual-action ribosomal maturation protein DarP of Shigella boydii serotype 18 (strain CDC 3083-94 / BS512).